The sequence spans 330 residues: D-cysteine desulfhydrase (330 aa).

Lys52 is modified (N6-(pyridoxal phosphate)lysine).

The protein belongs to the ACC deaminase/D-cysteine desulfhydrase family. As to quaternary structure, homodimer. It depends on pyridoxal 5'-phosphate as a cofactor.

The enzyme catalyses D-cysteine + H2O = hydrogen sulfide + pyruvate + NH4(+) + H(+). Catalyzes the alpha,beta-elimination reaction of D-cysteine and of several D-cysteine derivatives. It could be a defense mechanism against D-cysteine. This Yersinia enterocolitica serotype O:8 / biotype 1B (strain NCTC 13174 / 8081) protein is D-cysteine desulfhydrase.